Reading from the N-terminus, the 307-residue chain is METPHIPVLLEEVLESFSRVPEGYFVDCTLGYAGHSSEILKRYDHLKHIGIDRDDEALAFSKKRLEPFRDRSTLYKGTFATVLPTLKEAPVTALLADFGVSSLQLDKKERGFAFDSETLDMRMDANAPLSAYEVVNTYPKEKLEYIFDTYGEVRSYKKLASAVVDARAKAPIESAKALSEIAKGVIPPGGKIHPATLMFQAIRIEVNNELGEIEGLLDAIEAKHYEGEVVSLITFHSLEDRLVKNRFRKWSQECICDPHAIRCTCGKKHALGKALSRKPVTASKEELRVNPRSRSAKLRSFRFKSDS.

Residues 33-35 (AGH), aspartate 52, leucine 83, aspartate 97, and glutamine 104 contribute to the S-adenosyl-L-methionine site.

Belongs to the methyltransferase superfamily. RsmH family.

The protein resides in the cytoplasm. It carries out the reaction cytidine(1402) in 16S rRNA + S-adenosyl-L-methionine = N(4)-methylcytidine(1402) in 16S rRNA + S-adenosyl-L-homocysteine + H(+). Its function is as follows. Specifically methylates the N4 position of cytidine in position 1402 (C1402) of 16S rRNA. This is Ribosomal RNA small subunit methyltransferase H from Sulfurovum sp. (strain NBC37-1).